We begin with the raw amino-acid sequence, 200 residues long: Holliday junction branch migration complex subunit RuvA (200 aa).

The domain I stretch occupies residues 1–63 (MYAYVKGKLT…EDAQLLYGFS (63 aa)). Positions 64–142 (SEEEKDMFLS…ITEEDSDSLL (79 aa)) are domain II. The tract at residues 143-149 (QVDATST) is flexible linker. The tract at residues 150–200 (VQDQFVQEAMLALEALGYSKRELAKVEKTLNKNKYDSVDEAVKAGLQLVVS) is domain III.

The protein belongs to the RuvA family. As to quaternary structure, homotetramer. Forms an RuvA(8)-RuvB(12)-Holliday junction (HJ) complex. HJ DNA is sandwiched between 2 RuvA tetramers; dsDNA enters through RuvA and exits via RuvB. An RuvB hexamer assembles on each DNA strand where it exits the tetramer. Each RuvB hexamer is contacted by two RuvA subunits (via domain III) on 2 adjacent RuvB subunits; this complex drives branch migration. In the full resolvosome a probable DNA-RuvA(4)-RuvB(12)-RuvC(2) complex forms which resolves the HJ.

Its subcellular location is the cytoplasm. Functionally, the RuvA-RuvB-RuvC complex processes Holliday junction (HJ) DNA during genetic recombination and DNA repair, while the RuvA-RuvB complex plays an important role in the rescue of blocked DNA replication forks via replication fork reversal (RFR). RuvA specifically binds to HJ cruciform DNA, conferring on it an open structure. The RuvB hexamer acts as an ATP-dependent pump, pulling dsDNA into and through the RuvAB complex. HJ branch migration allows RuvC to scan DNA until it finds its consensus sequence, where it cleaves and resolves the cruciform DNA. This chain is Holliday junction branch migration complex subunit RuvA, found in Staphylococcus aureus (strain Mu3 / ATCC 700698).